The chain runs to 287 residues: Seed leukoagglutinin (287 aa).

The first 29 residues, 1–29, serve as a signal peptide directing secretion; the sequence is MATSNSKPTQVLLATFLTFFFLLLNNVNS. Tyr-74 contacts N-acetyl-alpha-neuraminyl-(2-&gt;3)-beta-D-galactosyl-(1-&gt;4)-beta-D-glucose. An N-linked (GlcNAc...) (paucimannose) asparagine glycan is attached at Asn-90. 3 residues coordinate N-acetyl-alpha-neuraminyl-(2-&gt;3)-beta-D-galactosyl-(1-&gt;4)-beta-D-glucose: Asp-116, Ser-133, and Lys-136. Asn-142 is a glycosylation site (N-linked (GlcNAc...) (paucimannose) asparagine). Mn(2+)-binding residues include Glu-156 and Asp-158. Positions 158, 160, 166, and 169 each coordinate Ca(2+). The N-acetyl-alpha-neuraminyl-(2-&gt;3)-beta-D-galactosyl-(1-&gt;4)-beta-D-glucose site is built by Tyr-160 and Asp-166. Mn(2+)-binding residues include Asp-169 and His-174. A glycan (N-linked (GlcNAc...) (high mannose) asparagine; partial) is linked at Asn-208. N-linked (GlcNAc...) (paucimannose) asparagine; partial glycosylation is present at Asn-220. Residue Glu-253 coordinates N-acetyl-alpha-neuraminyl-(2-&gt;3)-beta-D-galactosyl-(1-&gt;4)-beta-D-glucose. Residues 279–287 constitute a propeptide, removed in mature form; the sequence is NVHIARYTA.

The protein belongs to the leguminous lectin family. In terms of assembly, homodimer; disulfide-linked. Dimer of homodimers. Post-translationally, the glycosylation on N-90 is determined to by of the high mannose type in PubMed:26003537, while PubMed:27720757 found a paucimannose at this position. In terms of processing, processed at its C-terminus.

Its function is as follows. Sialic acid-binding lectin recognizing oligosaccharides containing terminal sialic acid linked via alpha-2,3 bond to penultimate galactose residues. Binds the trisaccharide sequence Neu5Ac-alpha-2,3-Gal-beta-1,4-GlcNAc. Binds fetuin when fully glycosylated but not when the high mannose-type glycans are removed, although the secondary structure is virtually unaffected by deglycosylation of the high mannose-type glycans. The lectin activity may depend on the presence of a single GlcNAc attached to N-90. This chain is Seed leukoagglutinin, found in Maackia amurensis (Amur maackia).